The primary structure comprises 129 residues: Phosphoribosyl-AMP cyclohydrolase (129 aa).

Position 79 (aspartate 79) interacts with Mg(2+). Cysteine 80 provides a ligand contact to Zn(2+). Mg(2+) contacts are provided by aspartate 81 and aspartate 83. Zn(2+)-binding residues include cysteine 96 and cysteine 103.

The protein belongs to the PRA-CH family. In terms of assembly, homodimer. The cofactor is Mg(2+). Zn(2+) serves as cofactor.

It localises to the cytoplasm. The enzyme catalyses 1-(5-phospho-beta-D-ribosyl)-5'-AMP + H2O = 1-(5-phospho-beta-D-ribosyl)-5-[(5-phospho-beta-D-ribosylamino)methylideneamino]imidazole-4-carboxamide. It functions in the pathway amino-acid biosynthesis; L-histidine biosynthesis; L-histidine from 5-phospho-alpha-D-ribose 1-diphosphate: step 3/9. Its function is as follows. Catalyzes the hydrolysis of the adenine ring of phosphoribosyl-AMP. This is Phosphoribosyl-AMP cyclohydrolase from Magnetococcus marinus (strain ATCC BAA-1437 / JCM 17883 / MC-1).